We begin with the raw amino-acid sequence, 70 residues long: SPbeta prophage-derived uncharacterized HTH-type transcriptional regulator YopO (70 aa).

Residues 5–59 (IKQLMVKRGITIEELSRETMIDMQTLNKIIEMPDESDVTTIKLIALVLNVSIDEL) enclose the HTH cro/C1-type domain. The segment at residues 16-35 (IEELSRETMIDMQTLNKIIE) is a DNA-binding region (H-T-H motif).

In Bacillus subtilis (strain 168), this protein is SPbeta prophage-derived uncharacterized HTH-type transcriptional regulator YopO (yopO).